A 172-amino-acid chain; its full sequence is VLLDGNGEVVQNGGTYYLLPQVWAQGGGVQLAKTGEETCPLTVVQSPNELSDGKPIRIESRLRSTFIPDDDEVRIGFAYAPKCAPSPWWTVVEDEQEGLSVKLSEDESTQFDYPFKFEQVSDKLHSYKLLYCEGKHEKCASIGINRDQKGYRRLVVTEDNPLTVVLKKDESS.

2 disulfide bridges follow: Cys39-Cys83 and Cys132-Cys139.

Belongs to the protease inhibitor I3 (leguminous Kunitz-type inhibitor) family.

Inhibition of trypsin. The chain is Trypsin inhibitor DE-3 from Erythrina latissima (Broad-leaved coral tree).